The chain runs to 349 residues: Ion-translocating oxidoreductase complex subunit D (349 aa).

The next 3 membrane-spanning stretches (helical) occupy residues 37–57 (AFFG…ALSA), 73–90 (LSDN…VAIP), and 124–144 (AMAA…TWIA). Threonine 185 bears the FMN phosphoryl threonine mark. Transmembrane regions (helical) follow at residues 212 to 232 (ATGV…LVLL), 239 to 259 (WHIS…GFLL), 265 to 285 (GSPL…FIAT), 291 to 311 (ATSP…VYII), and 315 to 335 (GGYP…APFI).

It belongs to the NqrB/RnfD family. The complex is composed of six subunits: RnfA, RnfB, RnfC, RnfD, RnfE and RnfG. FMN serves as cofactor.

Its subcellular location is the cell inner membrane. In terms of biological role, part of a membrane-bound complex that couples electron transfer with translocation of ions across the membrane. In Shewanella sp. (strain W3-18-1), this protein is Ion-translocating oxidoreductase complex subunit D.